Reading from the N-terminus, the 215-residue chain is Ceramide-1-phosphate transfer protein (215 aa).

The an N-acylsphingoid base 1-phosphate site is built by Asp-57, Lys-61, Arg-107, Arg-111, and His-151.

This sequence belongs to the GLTP family.

The protein localises to the cytoplasm. It localises to the cytosol. It is found in the golgi apparatus. Its subcellular location is the trans-Golgi network membrane. The protein resides in the cell membrane. The protein localises to the endosome membrane. It localises to the nucleus outer membrane. It carries out the reaction N-(hexadecanoyl)-sphing-4-enine-1-phosphate(in) = N-(hexadecanoyl)-sphing-4-enine-1-phosphate(out). It catalyses the reaction N-(9Z-octadecenoyl)-sphing-4-enine-1-phosphate(in) = N-(9Z-octadecenoyl)-sphing-4-enine-1-phosphate(out). Functionally, mediates the intracellular transfer of ceramide-1-phosphate (C1P) between organelle membranes and the cell membrane. Required for normal structure of the Golgi stacks. Can bind phosphoceramides with a variety of aliphatic chains, but has a preference for lipids with saturated C16:0 or monounsaturated C18:1 aliphatic chains, and is inefficient with phosphoceramides containing lignoceryl (C24:0). Plays a role in the regulation of the cellular levels of ceramide-1-phosphate, and thereby contributes to the regulation of phospholipase PLA2G4A activity and the release of arachidonic acid. Has no activity with galactosylceramide, lactosylceramide, sphingomyelin, phosphatidylcholine, phosphatidic acid and ceramide. C1P transfer is stimulated by phosphatidylserine in C1P source vesicles. Regulates autophagy and pyroptosis, but not apoptosis. The protein is Ceramide-1-phosphate transfer protein (cptp) of Xenopus tropicalis (Western clawed frog).